The chain runs to 437 residues: 3-ketoacyl-CoA thiolase (437 aa).

C99 acts as the Acyl-thioester intermediate in catalysis. Active-site proton acceptor residues include H392 and C422.

Belongs to the thiolase-like superfamily. Thiolase family. Heterotetramer of two alpha chains (FadJ) and two beta chains (FadI).

Its subcellular location is the cytoplasm. The enzyme catalyses an acyl-CoA + acetyl-CoA = a 3-oxoacyl-CoA + CoA. The protein operates within lipid metabolism; fatty acid beta-oxidation. Functionally, catalyzes the final step of fatty acid oxidation in which acetyl-CoA is released and the CoA ester of a fatty acid two carbons shorter is formed. The protein is 3-ketoacyl-CoA thiolase of Pectobacterium atrosepticum (strain SCRI 1043 / ATCC BAA-672) (Erwinia carotovora subsp. atroseptica).